The primary structure comprises 546 residues: Chaperonin GroEL (546 aa).

ATP contacts are provided by residues 30–33 (TLGP), K51, 87–91 (DGTTT), G415, and D496. Residues 526–546 (PEPKSAPAGGMGGMGGMDGMM) form a disordered region. Residues 534–546 (GGMGGMGGMDGMM) show a composition bias toward gly residues.

This sequence belongs to the chaperonin (HSP60) family. In terms of assembly, forms a cylinder of 14 subunits composed of two heptameric rings stacked back-to-back. Interacts with the co-chaperonin GroES.

The protein localises to the cytoplasm. It carries out the reaction ATP + H2O + a folded polypeptide = ADP + phosphate + an unfolded polypeptide.. Functionally, together with its co-chaperonin GroES, plays an essential role in assisting protein folding. The GroEL-GroES system forms a nano-cage that allows encapsulation of the non-native substrate proteins and provides a physical environment optimized to promote and accelerate protein folding. In Rhodopseudomonas palustris, this protein is Chaperonin GroEL.